A 345-amino-acid polypeptide reads, in one-letter code: N-acetyl-gamma-glutamyl-phosphate reductase (345 aa).

The active site involves C149.

The protein belongs to the NAGSA dehydrogenase family. Type 1 subfamily.

It is found in the cytoplasm. It carries out the reaction N-acetyl-L-glutamate 5-semialdehyde + phosphate + NADP(+) = N-acetyl-L-glutamyl 5-phosphate + NADPH + H(+). It participates in amino-acid biosynthesis; L-arginine biosynthesis; N(2)-acetyl-L-ornithine from L-glutamate: step 3/4. Catalyzes the NADPH-dependent reduction of N-acetyl-5-glutamyl phosphate to yield N-acetyl-L-glutamate 5-semialdehyde. In Bacillus subtilis (strain 168), this protein is N-acetyl-gamma-glutamyl-phosphate reductase.